We begin with the raw amino-acid sequence, 95 residues long: Mitochondrial import inner membrane translocase subunit TIM13 (95 aa).

A Twin CX3C motif motif is present at residues 47–67; it reads CFEKCLQSPYKDGNEGCVDQC. Intrachain disulfides connect Cys47–Cys67 and Cys51–Cys63.

It belongs to the small Tim family. Heterohexamer; composed of 3 copies of TIM8 and 3 copies of TIM13, named soluble 70 kDa complex. Associates with the TIM22 complex, whose core is composed of TIM22 and TIM54. Interacts with the transmembrane regions of multi-pass transmembrane proteins in transit.

The protein localises to the mitochondrion inner membrane. Mitochondrial intermembrane chaperone that participates in the import and insertion of some multi-pass transmembrane proteins into the mitochondrial inner membrane. Also required for the transfer of beta-barrel precursors from the TOM complex to the sorting and assembly machinery (SAM complex) of the outer membrane. Acts as a chaperone-like protein that protects the hydrophobic precursors from aggregation and guide them through the mitochondrial intermembrane space. The TIM8-TIM13 complex is non essential and only mediates the import of few proteins, while the predominant TIM9-TIM10 70 kDa complex is crucial and mediates the import of much more proteins. In Candida glabrata (strain ATCC 2001 / BCRC 20586 / JCM 3761 / NBRC 0622 / NRRL Y-65 / CBS 138) (Yeast), this protein is Mitochondrial import inner membrane translocase subunit TIM13 (TIM13).